The chain runs to 507 residues: Bifunctional purine biosynthesis protein PurH (507 aa).

Positions 1–144 (MKRALLSVSD…KNSDSVWAVV (144 aa)) constitute an MGS-like domain.

This sequence belongs to the PurH family.

It catalyses the reaction (6R)-10-formyltetrahydrofolate + 5-amino-1-(5-phospho-beta-D-ribosyl)imidazole-4-carboxamide = 5-formamido-1-(5-phospho-D-ribosyl)imidazole-4-carboxamide + (6S)-5,6,7,8-tetrahydrofolate. The catalysed reaction is IMP + H2O = 5-formamido-1-(5-phospho-D-ribosyl)imidazole-4-carboxamide. Its pathway is purine metabolism; IMP biosynthesis via de novo pathway; 5-formamido-1-(5-phospho-D-ribosyl)imidazole-4-carboxamide from 5-amino-1-(5-phospho-D-ribosyl)imidazole-4-carboxamide (10-formyl THF route): step 1/1. The protein operates within purine metabolism; IMP biosynthesis via de novo pathway; IMP from 5-formamido-1-(5-phospho-D-ribosyl)imidazole-4-carboxamide: step 1/1. The polypeptide is Bifunctional purine biosynthesis protein PurH (Lacticaseibacillus casei (strain BL23) (Lactobacillus casei)).